Consider the following 183-residue polypeptide: ATP synthase subunit delta (183 aa).

This sequence belongs to the ATPase delta chain family. In terms of assembly, F-type ATPases have 2 components, F(1) - the catalytic core - and F(0) - the membrane proton channel. F(1) has five subunits: alpha(3), beta(3), gamma(1), delta(1), epsilon(1). F(0) has three main subunits: a(1), b(2) and c(10-14). The alpha and beta chains form an alternating ring which encloses part of the gamma chain. F(1) is attached to F(0) by a central stalk formed by the gamma and epsilon chains, while a peripheral stalk is formed by the delta and b chains.

The protein localises to the cell inner membrane. In terms of biological role, f(1)F(0) ATP synthase produces ATP from ADP in the presence of a proton or sodium gradient. F-type ATPases consist of two structural domains, F(1) containing the extramembraneous catalytic core and F(0) containing the membrane proton channel, linked together by a central stalk and a peripheral stalk. During catalysis, ATP synthesis in the catalytic domain of F(1) is coupled via a rotary mechanism of the central stalk subunits to proton translocation. Its function is as follows. This protein is part of the stalk that links CF(0) to CF(1). It either transmits conformational changes from CF(0) to CF(1) or is implicated in proton conduction. This Nitratidesulfovibrio vulgaris (strain ATCC 29579 / DSM 644 / CCUG 34227 / NCIMB 8303 / VKM B-1760 / Hildenborough) (Desulfovibrio vulgaris) protein is ATP synthase subunit delta.